Here is a 199-residue protein sequence, read N- to C-terminus: Recombination protein RecR (199 aa).

The C4-type zinc finger occupies 57 to 72 (CSVCGNITEDDPCPIC). One can recognise a Toprim domain in the interval 80 to 176 (SRVLVVERSR…KVTRLAHGLS (97 aa)).

The protein belongs to the RecR family.

Functionally, may play a role in DNA repair. It seems to be involved in an RecBC-independent recombinational process of DNA repair. It may act with RecF and RecO. This is Recombination protein RecR from Limosilactobacillus fermentum (strain NBRC 3956 / LMG 18251) (Lactobacillus fermentum).